Consider the following 426-residue polypeptide: Glutamate-1-semialdehyde 2,1-aminomutase (426 aa).

Position 265 is an N6-(pyridoxal phosphate)lysine (lysine 265).

The protein belongs to the class-III pyridoxal-phosphate-dependent aminotransferase family. HemL subfamily. As to quaternary structure, homodimer. Requires pyridoxal 5'-phosphate as cofactor.

It is found in the cytoplasm. It catalyses the reaction (S)-4-amino-5-oxopentanoate = 5-aminolevulinate. The protein operates within porphyrin-containing compound metabolism; protoporphyrin-IX biosynthesis; 5-aminolevulinate from L-glutamyl-tRNA(Glu): step 2/2. This Klebsiella pneumoniae (strain 342) protein is Glutamate-1-semialdehyde 2,1-aminomutase.